A 298-amino-acid polypeptide reads, in one-letter code: GTP cyclohydrolase FolE2 (298 aa).

Belongs to the GTP cyclohydrolase IV family.

The enzyme catalyses GTP + H2O = 7,8-dihydroneopterin 3'-triphosphate + formate + H(+). The protein operates within cofactor biosynthesis; 7,8-dihydroneopterin triphosphate biosynthesis; 7,8-dihydroneopterin triphosphate from GTP: step 1/1. In terms of biological role, converts GTP to 7,8-dihydroneopterin triphosphate. This chain is GTP cyclohydrolase FolE2, found in Pseudomonas fluorescens (strain Pf0-1).